We begin with the raw amino-acid sequence, 154 residues long: Xanthine-guanine phosphoribosyltransferase (154 aa).

Residues 37–38, arginine 69, and 88–96 each bind 5-phospho-alpha-D-ribose 1-diphosphate; these read RG and EDLVDSGDT. Arginine 69 lines the GMP pocket. Aspartate 89 serves as a coordination point for Mg(2+). Guanine is bound by residues aspartate 92 and isoleucine 135. Xanthine is bound by residues aspartate 92 and isoleucine 135. Residues 92–96 and 134–135 each bind GMP; these read DSGDT and WI.

This sequence belongs to the purine/pyrimidine phosphoribosyltransferase family. XGPT subfamily. Homotetramer. It depends on Mg(2+) as a cofactor.

It is found in the cell inner membrane. The catalysed reaction is GMP + diphosphate = guanine + 5-phospho-alpha-D-ribose 1-diphosphate. It catalyses the reaction XMP + diphosphate = xanthine + 5-phospho-alpha-D-ribose 1-diphosphate. It carries out the reaction IMP + diphosphate = hypoxanthine + 5-phospho-alpha-D-ribose 1-diphosphate. The protein operates within purine metabolism; GMP biosynthesis via salvage pathway; GMP from guanine: step 1/1. Its pathway is purine metabolism; XMP biosynthesis via salvage pathway; XMP from xanthine: step 1/1. Its function is as follows. Purine salvage pathway enzyme that catalyzes the transfer of the ribosyl-5-phosphate group from 5-phospho-alpha-D-ribose 1-diphosphate (PRPP) to the N9 position of the 6-oxopurines guanine and xanthine to form the corresponding ribonucleotides GMP (guanosine 5'-monophosphate) and XMP (xanthosine 5'-monophosphate), with the release of PPi. To a lesser extent, also acts on hypoxanthine. The protein is Xanthine-guanine phosphoribosyltransferase of Vibrio atlanticus (strain LGP32) (Vibrio splendidus (strain Mel32)).